Reading from the N-terminus, the 64-residue chain is Large ribosomal subunit protein bL35 (64 aa).

It belongs to the bacterial ribosomal protein bL35 family.

In Chlorobium limicola (strain DSM 245 / NBRC 103803 / 6330), this protein is Large ribosomal subunit protein bL35.